The following is a 272-amino-acid chain: Bis(5'-nucleosyl)-tetraphosphatase, symmetrical (272 aa).

This sequence belongs to the Ap4A hydrolase family.

The catalysed reaction is P(1),P(4)-bis(5'-adenosyl) tetraphosphate + H2O = 2 ADP + 2 H(+). Its function is as follows. Hydrolyzes diadenosine 5',5'''-P1,P4-tetraphosphate to yield ADP. In Glaesserella parasuis serovar 5 (strain SH0165) (Haemophilus parasuis), this protein is Bis(5'-nucleosyl)-tetraphosphatase, symmetrical.